A 73-amino-acid polypeptide reads, in one-letter code: Antimicrobial peptide lumbricin-PG (73 aa).

Residues 1-14 (MLLTISDFLFLSLT) form the signal peptide. Residues 25–48 (RPWSDRKNNYSGPQFTYPPEKAPP) are disordered.

It is found in the secreted. Displays antimicrobial activity against the Gram-positive bacterium S.aureus ATCC 2592, the Gram-negative bacteria E.coli ATCC 25922 and P.aeruginosa ATCC 27853, and the fungus C.albicans ATCC 2002. Displays stronger activity against P.aeruginosa and S.aureus than E.coli. Displays very weak hemolytic activity. The polypeptide is Antimicrobial peptide lumbricin-PG (Metaphire guillelmi (Earthworm)).